The sequence spans 633 residues: DEAD-box ATP-dependent RNA helicase 37 (633 aa).

Residues methionine 1 to arginine 110 form a disordered region. Residue serine 2 is modified to N-acetylserine. The segment covering serine 11–proline 25 has biased composition (polar residues). Composition is skewed to gly residues over residues glycine 68–tyrosine 80 and proline 87–tryptophan 101. A Q motif motif is present at residues asparagine 159–arginine 187. The Helicase ATP-binding domain occupies isoleucine 190–leucine 374. ATP is bound at residue alanine 203–threonine 210. The DEAD box signature appears at aspartate 318–aspartate 321. A Helicase C-terminal domain is found at histidine 401 to alanine 552. The tract at residues serine 555–tyrosine 600 is disordered. Residues phenylalanine 580–tyrosine 600 are compositionally biased toward gly residues.

This sequence belongs to the DEAD box helicase family. DDX3/DED1 subfamily.

The catalysed reaction is ATP + H2O = ADP + phosphate + H(+). This chain is DEAD-box ATP-dependent RNA helicase 37 (RH37), found in Arabidopsis thaliana (Mouse-ear cress).